A 318-amino-acid chain; its full sequence is MTTVPVTDIQNDLITEFSEDNYPSNKNYEITLRQMSILTHVNNVVDREHNAAVVSSPEEISSQLNEDLFPDDDSPATIIERVQPHTTIIDDTPPPTFRRELLISEQRQQREKRFNITVSKNAEAIMESRSMITSMPTQTPSLGVVYDKDKRIQMLEDEVVNLRNQRSNTKSSDNLDNFTKILFGKTPYKSTEVNKRIAIVNYANLNGSPLSVEDLDVCSEDEIDRIYKTIKQYHESRKQKIIVTNVIIIVINIIEQALLKLGFEEIKGLSTDITSEIIDVEIGDDCDAVASKLGIGNSPVLNIVLFILKIFVKRIKII.

The stretch at 145 to 172 (VYDKDKRIQMLEDEVVNLRNQRSNTKSS) forms a coiled coil.

This sequence belongs to the orthopoxvirus OPG137 family. As to quaternary structure, homomultimer. Interacts with OPG160. In terms of processing, phosphorylated by a OPG054-independent mechanism.

It is found in the host cytoplasm. Its function is as follows. Required for viral crescent formation early during virus morphogenesis. The protein is Protein OPG137 (OPG137) of Vaccinia virus (strain Western Reserve) (VACV).